A 290-amino-acid chain; its full sequence is Ribosomal RNA small subunit methyltransferase A (290 aa).

6 residues coordinate S-adenosyl-L-methionine: asparagine 27, leucine 29, glycine 54, glutamate 75, aspartate 100, and asparagine 125.

The protein belongs to the class I-like SAM-binding methyltransferase superfamily. rRNA adenine N(6)-methyltransferase family. RsmA subfamily.

The protein resides in the cytoplasm. The catalysed reaction is adenosine(1518)/adenosine(1519) in 16S rRNA + 4 S-adenosyl-L-methionine = N(6)-dimethyladenosine(1518)/N(6)-dimethyladenosine(1519) in 16S rRNA + 4 S-adenosyl-L-homocysteine + 4 H(+). Its function is as follows. Specifically dimethylates two adjacent adenosines (A1518 and A1519) in the loop of a conserved hairpin near the 3'-end of 16S rRNA in the 30S particle. May play a critical role in biogenesis of 30S subunits. The chain is Ribosomal RNA small subunit methyltransferase A from Streptococcus pneumoniae (strain Hungary19A-6).